The primary structure comprises 460 residues: Probable lipid II flippase MurJ (460 aa).

Helical transmembrane passes span Ile4 to Phe24, Phe50 to Ala70, Ile95 to Leu115, Phe122 to Ile142, Leu155 to Val175, Ile228 to Leu248, Leu257 to Ala277, Lys292 to Ser312, Val336 to Trp356, Ala366 to Pro386, and Leu428 to Val448.

This sequence belongs to the MurJ/MviN family.

It is found in the cell inner membrane. It functions in the pathway cell wall biogenesis; peptidoglycan biosynthesis. Involved in peptidoglycan biosynthesis. Transports lipid-linked peptidoglycan precursors from the inner to the outer leaflet of the cytoplasmic membrane. This chain is Probable lipid II flippase MurJ, found in Helicobacter pylori (strain J99 / ATCC 700824) (Campylobacter pylori J99).